The sequence spans 113 residues: MTSDLSSKHCESCEGIGAALNSEQIKNLLPQLNTKWEVTEDNRIIKRAFSFKNFYETMAFVNAIAWIANIENHHPDLEVGYNYCRVHFMTHALNGLTHNDFICAAKIDKLLVD.

It belongs to the pterin-4-alpha-carbinolamine dehydratase family.

It carries out the reaction (4aS,6R)-4a-hydroxy-L-erythro-5,6,7,8-tetrahydrobiopterin = (6R)-L-erythro-6,7-dihydrobiopterin + H2O. The chain is Putative pterin-4-alpha-carbinolamine dehydratase from Legionella pneumophila (strain Paris).